The chain runs to 122 residues: Large ribosomal subunit protein uL14 (122 aa).

The protein belongs to the universal ribosomal protein uL14 family. Part of the 50S ribosomal subunit. Forms a cluster with proteins L3 and L19. In the 70S ribosome, L14 and L19 interact and together make contacts with the 16S rRNA in bridges B5 and B8.

Functionally, binds to 23S rRNA. Forms part of two intersubunit bridges in the 70S ribosome. This is Large ribosomal subunit protein uL14 from Paracidovorax citrulli (strain AAC00-1) (Acidovorax citrulli).